Consider the following 205-residue polypeptide: UPF0056 membrane protein MJ1677 (205 aa).

Transmembrane regions (helical) follow at residues 7-27 (ILAF…PVFI), 49-69 (ALAI…FFGI), 70-90 (SLDA…LDMV), 112-132 (IALM…TACM), 145-165 (FLVI…LLSA), and 185-205 (GLIL…GALL).

This sequence belongs to the UPF0056 (MarC) family.

It localises to the cell membrane. This is UPF0056 membrane protein MJ1677 from Methanocaldococcus jannaschii (strain ATCC 43067 / DSM 2661 / JAL-1 / JCM 10045 / NBRC 100440) (Methanococcus jannaschii).